We begin with the raw amino-acid sequence, 508 residues long: Lysine--tRNA ligase (508 aa).

Residues glutamate 418 and glutamate 425 each coordinate Mg(2+).

It belongs to the class-II aminoacyl-tRNA synthetase family. As to quaternary structure, homodimer. Requires Mg(2+) as cofactor.

The protein localises to the cytoplasm. It catalyses the reaction tRNA(Lys) + L-lysine + ATP = L-lysyl-tRNA(Lys) + AMP + diphosphate. The protein is Lysine--tRNA ligase of Burkholderia mallei (strain NCTC 10247).